The chain runs to 259 residues: MEHKINRREKEKDYEGKHNSLEDADQGKNCKSTLMTLNVGGYLYITQKQTLTKYPDTFLEGIVNGKILCPFDADGHYFIDRDGLLFRHVLNFLRNGELLLPEGFRENQLLAQEAEFFQLKGLAEEVKSRWEKEQLTPRETTFLEITDNHDRSQGLRIFCNAPDFISKIKSRIVLVSKSRLDGFPEEFSISSNTIQFKYFIKSENGTRLVLKEDNTFVCTLETLKFEAIMMALKCGFRLLTSLDCSKGSIVHSDALHFIK.

A disordered region spans residues 1–22; it reads MEHKINRREKEKDYEGKHNSLE. A BTB domain is found at 33–134; sequence TLMTLNVGGY…EVKSRWEKEQ (102 aa).

The chain is BTB/POZ domain-containing protein KCTD4 (KCTD4) from Bos taurus (Bovine).